Reading from the N-terminus, the 687-residue chain is Putative ammonium transporter 3 (687 aa).

The next 11 membrane-spanning stretches (helical) occupy residues 39-59 (AVWI…FGLL), 77-97 (VVDV…FSYG), 134-154 (ASFL…SGAV), 162-182 (SYIL…HWVW), 196-216 (FAGC…ATVF), 240-260 (LGTF…VWGI), 272-292 (AVAT…ISFV), 299-319 (VNFL…ICAV), 323-343 (WHAL…LPLL), 352-372 (VGIV…VGIF), and 404-424 (CTAA…FLIS). Disordered stretches follow at residues 521-544 (RTNA…FNNQ), 549-568 (AVSS…RRTE), and 592-687 (PPEE…NPPV). Residues 549–564 (AVSSTVSTARNGPSTG) are compositionally biased toward polar residues. Low complexity-rich tracts occupy residues 614–632 (SPSS…SPSI) and 648–665 (STAS…KNST).

The protein belongs to the ammonia transporter channel (TC 1.A.11.2) family.

It localises to the membrane. In terms of biological role, involved in the uptake of ammonia. This chain is Putative ammonium transporter 3 (amt-3), found in Caenorhabditis elegans.